The chain runs to 77 residues: Sec-independent protein translocase protein TatA 2 (77 aa).

Residues 2 to 22 (FPGGISMTELIIILAVILLLF) form a helical membrane-spanning segment. The disordered stretch occupies residues 52–77 (KEVKAEDVKTEERKEEKKEEKEKVEA).

Belongs to the TatA/E family. Forms a complex with TatC.

It localises to the cell inner membrane. Part of the twin-arginine translocation (Tat) system that transports large folded proteins containing a characteristic twin-arginine motif in their signal peptide across membranes. TatA could form the protein-conducting channel of the Tat system. This Aquifex aeolicus (strain VF5) protein is Sec-independent protein translocase protein TatA 2.